Reading from the N-terminus, the 220-residue chain is Ribose-5-phosphate isomerase A (220 aa).

Residues 28–31 (TGST), 81–84 (DGAD), and 94–97 (KGGG) each bind substrate. Glu-103 functions as the Proton acceptor in the catalytic mechanism. Residue Lys-121 coordinates substrate.

This sequence belongs to the ribose 5-phosphate isomerase family. As to quaternary structure, homodimer.

The catalysed reaction is aldehydo-D-ribose 5-phosphate = D-ribulose 5-phosphate. It participates in carbohydrate degradation; pentose phosphate pathway; D-ribose 5-phosphate from D-ribulose 5-phosphate (non-oxidative stage): step 1/1. Its function is as follows. Catalyzes the reversible conversion of ribose-5-phosphate to ribulose 5-phosphate. This Vesicomyosocius okutanii subsp. Calyptogena okutanii (strain HA) protein is Ribose-5-phosphate isomerase A.